Here is a 746-residue protein sequence, read N- to C-terminus: Iron-sulfur clusters transporter ABCB7, mitochondrial (746 aa).

A mitochondrion-targeting transit peptide spans 1 to 19 (MAPMLVSLNCGIRVQRRTL). Residues 20–133 (TLLIRQTSSY…KDRPDLRARV (114 aa)) are Mitochondrial matrix-facing. The ABC transmembrane type-1 domain maps to 133–429 (VAVSLGLLAG…LGTVYRETRQ (297 aa)). The helical transmembrane segment at 134–154 (AVSLGLLAGAKLTNVMVPFMF) threads the bilayer. The Mitochondrial intermembrane portion of the chain corresponds to 155 to 176 (KYAVDELNQMSGHMLNLNDAPS). The chain crosses the membrane as a helical span at residues 177–199 (TVATMTTAVLIGYGVSRAGSALF). Residues 200 to 252 (NELRNTVFGKVAQSSIRRIAKNVFLHLHNLDLGFHLSRQTGALSKAIDRGTRG) lie on the Mitochondrial matrix side of the membrane. A helical membrane pass occupies residues 253-273 (ISFVLSALVFNLGPTVFEMFL). Topologically, residues 274-283 (VSAILYYKCG) are mitochondrial intermembrane. The chain crosses the membrane as a helical span at residues 284–304 (GEFAAVALGTLSAYTIFTILV). Residues 305-375 (TQWRTRFRIE…TLAMLNFGQS (71 aa)) are Mitochondrial matrix-facing. Glutathione-binding positions include 308-312 (RTRFR) and 371-374 (NFGQ). Residues 376–396 (AIFSVGLTAIMLLASKGIAAG) traverse the membrane as a helical segment. Residues 397 to 402 (NMTVGD) lie on the Mitochondrial intermembrane side of the membrane. Residues 403–423 (LVMVNGLLFQLSLPLNFLGTV) form a helical membrane-spanning segment. Glycine 421 contacts glutathione. Topologically, residues 424–746 (YRETRQALID…SVKGCGNCSC (323 aa)) are mitochondrial matrix. The 235-residue stretch at 465 to 699 (IRFEDVYFEY…PGSLYAELWN (235 aa)) folds into the ABC transporter domain. ATP is bound by residues tyrosine 474 and 498–505 (GGSGSGKS). The disordered stretch occupies residues 708 to 728 (SRKSSSAPAAERLSQKEEERK).

This sequence belongs to the ABC transporter superfamily. ABCB family. Heavy Metal importer (TC 3.A.1.210) subfamily. Homodimer.

The protein localises to the mitochondrion inner membrane. Its subcellular location is the mitochondrion. The catalysed reaction is (glutathione)4[2Fe(III)-2S] cluster(in) + ATP + H2O = (glutathione)4[2Fe(III)-2S] cluster(out) + ADP + phosphate + H(+). In terms of biological role, exports glutathione-coordinated iron-sulfur clusters such as [2Fe-2S]-(GS)4 cluster from the mitochondria to the cytosol in an ATP-dependent manner allowing the assembly of the cytosolic iron-sulfur (Fe/S) cluster-containing proteins and participates in iron homeostasis. May play a role in iron and lipid metabolism. This chain is Iron-sulfur clusters transporter ABCB7, mitochondrial, found in Oryzias latipes (Japanese rice fish).